The following is an 883-amino-acid chain: Phosphoenolpyruvate carboxylase (883 aa).

Catalysis depends on residues His138 and Lys546.

The protein belongs to the PEPCase type 1 family. In terms of assembly, homotetramer. Mg(2+) is required as a cofactor.

It carries out the reaction oxaloacetate + phosphate = phosphoenolpyruvate + hydrogencarbonate. With respect to regulation, the enzyme has distinct binding sites for each of the allosteric effectors such as acetyl-CoA, fructose 1,6-bisphosphate, guanosine 3'-diphosphate 5'-diphosphate, long chain fatty acids, and L-aspartate. Forms oxaloacetate, a four-carbon dicarboxylic acid source for the tricarboxylic acid cycle. This Escherichia coli O157:H7 protein is Phosphoenolpyruvate carboxylase.